Here is a 621-residue protein sequence, read N- to C-terminus: ATP-dependent lipid A-core flippase (621 aa).

The next 5 membrane-spanning stretches (helical) occupy residues 32–52 (IVAALIAIFGVAATESYLAAF), 91–111 (VWGTENKIWTVPLFLIILVVI), 192–212 (IVLLYLNWQLSLIVVLMFPLL), 286–306 (SPFSELIASIALAVVIFIALW), and 312–332 (YTTIGEFMAFIVAMLQMYAPI). Residues 33–344 (VAALIAIFGV…LANISIPMQT (312 aa)) enclose the ABC transmembrane type-1 domain. One can recognise an ABC transporter domain in the interval 378–611 (FRNVDVEYRS…NGYYTMLRNI (234 aa)). An ATP-binding site is contributed by 410-417 (GRSGSGKS).

It belongs to the ABC transporter superfamily. Lipid exporter (TC 3.A.1.106) family. As to quaternary structure, homodimer.

It is found in the cell inner membrane. It catalyses the reaction ATP + H2O + lipid A-core oligosaccharideSide 1 = ADP + phosphate + lipid A-core oligosaccharideSide 2.. In terms of biological role, involved in lipopolysaccharide (LPS) biosynthesis. Translocates lipid A-core from the inner to the outer leaflet of the inner membrane. Transmembrane domains (TMD) form a pore in the inner membrane and the ATP-binding domain (NBD) is responsible for energy generation. The protein is ATP-dependent lipid A-core flippase of Neisseria meningitidis serogroup B (strain ATCC BAA-335 / MC58).